We begin with the raw amino-acid sequence, 447 residues long: Gamma-glutamyl phosphate reductase (447 aa).

It belongs to the gamma-glutamyl phosphate reductase family.

Its subcellular location is the cytoplasm. It carries out the reaction L-glutamate 5-semialdehyde + phosphate + NADP(+) = L-glutamyl 5-phosphate + NADPH + H(+). Its pathway is amino-acid biosynthesis; L-proline biosynthesis; L-glutamate 5-semialdehyde from L-glutamate: step 2/2. Functionally, catalyzes the NADPH-dependent reduction of L-glutamate 5-phosphate into L-glutamate 5-semialdehyde and phosphate. The product spontaneously undergoes cyclization to form 1-pyrroline-5-carboxylate. The polypeptide is Gamma-glutamyl phosphate reductase (Methanosarcina mazei (strain ATCC BAA-159 / DSM 3647 / Goe1 / Go1 / JCM 11833 / OCM 88) (Methanosarcina frisia)).